A 381-amino-acid polypeptide reads, in one-letter code: ELMO domain-containing protein 3 (381 aa).

The tract at residues 1–31 (MNEKSCSFHSKEELRDGQGERLSAGYSPSYD) is disordered. The segment covering 9-19 (HSKEELRDGQG) has biased composition (basic and acidic residues). Positions 170–324 (VHGRVLQTIY…ELEVLAKKSP (155 aa)) constitute an ELMO domain.

As to expression, both isoform 1 and isoform 6 are widely expressed.

The protein resides in the cell projection. Its subcellular location is the stereocilium. It localises to the kinocilium. The protein localises to the cytoplasm. It is found in the cytoskeleton. Functionally, acts as a GTPase-activating protein (GAP) for ARL2 with low specific activity. The protein is ELMO domain-containing protein 3 (ELMOD3) of Homo sapiens (Human).